The following is a 66-amino-acid chain: Large ribosomal subunit protein bL35 (66 aa).

Residues 20 to 40 form a disordered region; it reads GKIKSTQSAKRHGMTKRSKRS. Over residues 28–40 the composition is skewed to basic residues; it reads AKRHGMTKRSKRS.

The protein belongs to the bacterial ribosomal protein bL35 family.

In Ehrlichia chaffeensis (strain ATCC CRL-10679 / Arkansas), this protein is Large ribosomal subunit protein bL35.